The following is a 313-amino-acid chain: Porphobilinogen deaminase (313 aa).

C242 carries the post-translational modification S-(dipyrrolylmethanemethyl)cysteine.

It belongs to the HMBS family. As to quaternary structure, monomer. It depends on dipyrromethane as a cofactor.

It carries out the reaction 4 porphobilinogen + H2O = hydroxymethylbilane + 4 NH4(+). It functions in the pathway porphyrin-containing compound metabolism; protoporphyrin-IX biosynthesis; coproporphyrinogen-III from 5-aminolevulinate: step 2/4. Functionally, tetrapolymerization of the monopyrrole PBG into the hydroxymethylbilane pre-uroporphyrinogen in several discrete steps. The polypeptide is Porphobilinogen deaminase (Photorhabdus laumondii subsp. laumondii (strain DSM 15139 / CIP 105565 / TT01) (Photorhabdus luminescens subsp. laumondii)).